The following is a 376-amino-acid chain: Cellular tumor antigen p53 (376 aa).

The interval M1–W36 is transcription activation (acidic). Residues D77–Q268 mediate DNA binding. The span at R150–D159 shows a compositional bias: basic and acidic residues. A disordered region spans residues R150–L171. Residues C151, H154, C214, and C218 each coordinate Zn(2+). Positions R249–R256 are interaction with DNA. Basic and acidic residues-rich tracts occupy residues D257 to E270 and S282 to K294. The disordered stretch occupies residues D257–Y306. Residues K280–K297 carry the Bipartite nuclear localization signal motif. Residues D303–P334 are oligomerization. The Nuclear export signal signature appears at E317–L328. The segment at Q342–D376 is disordered. Positions K347–K372 are basic (repression of DNA-binding). The segment covering C349–K361 has biased composition (basic and acidic residues).

The protein belongs to the p53 family. As to quaternary structure, binds DNA as a homotetramer. The cofactor is Zn(2+).

Its subcellular location is the cytoplasm. The protein resides in the nucleus. Functionally, multifunctional transcription factor that induces cell cycle arrest, DNA repair or apoptosis upon binding to its target DNA sequence. Acts as a tumor suppressor in many tumor types; induces growth arrest or apoptosis depending on the physiological circumstances and cell type. Negatively regulates cell division by controlling expression of a set of genes required for this process. One of the activated genes is an inhibitor of cyclin-dependent kinases. Apoptosis induction seems to be mediated either by stimulation of BAX and FAS antigen expression, or by repression of Bcl-2 expression. The polypeptide is Cellular tumor antigen p53 (tp53) (Ictalurus punctatus (Channel catfish)).